Consider the following 578-residue polypeptide: Glucans biosynthesis protein G (578 aa).

The signal sequence occupies residues 1 to 37 (MIVSPCIAPRIPGTRLRKAMLAGVALVGLLSAGQLWA). The segment at 511 to 578 (VPVEAPKPAK…TWSYQLPADE (68 aa)) is disordered. A compositionally biased stretch (basic and acidic residues) spans 517–543 (KPAKDSKQDKAAAKHAHAKAEKAKAEQ). Low complexity predominate over residues 544 to 554 (PAEQPAADAAS).

It belongs to the OpgD/OpgG family.

The protein localises to the periplasm. Its pathway is glycan metabolism; osmoregulated periplasmic glucan (OPG) biosynthesis. Its function is as follows. Involved in the biosynthesis of osmoregulated periplasmic glucans (OPGs). In Pseudomonas entomophila (strain L48), this protein is Glucans biosynthesis protein G.